The chain runs to 86 residues: Apolipoprotein C-I (86 aa).

The signal sequence occupies residues 1–26 (MRLFLSLPVLVVVLLMILEGPGPAQG).

The protein belongs to the apolipoprotein C1 family.

The protein resides in the secreted. Inhibitor of lipoprotein binding to the low density lipoprotein (LDL) receptor, LDL receptor-related protein, and very low density lipoprotein (VLDL) receptor. Associates with high density lipoproteins (HDL) and the triacylglycerol-rich lipoproteins in the plasma and makes up about 10% of the protein of the VLDL and 2% of that of HDL. Appears to interfere directly with fatty acid uptake and is also the major plasma inhibitor of cholesteryl ester transfer protein (CETP). Binds free fatty acids and reduces their intracellular esterification. Modulates the interaction of APOE with beta-migrating VLDL and inhibits binding of beta-VLDL to the LDL receptor-related protein. In Saimiri boliviensis boliviensis (Bolivian squirrel monkey), this protein is Apolipoprotein C-I (APOC1).